We begin with the raw amino-acid sequence, 155 residues long: Ribosomal RNA large subunit methyltransferase H (155 aa).

S-adenosyl-L-methionine contacts are provided by residues Gly104 and 123–128 (LSRLTL).

It belongs to the RNA methyltransferase RlmH family. In terms of assembly, homodimer.

The protein resides in the cytoplasm. It carries out the reaction pseudouridine(1915) in 23S rRNA + S-adenosyl-L-methionine = N(3)-methylpseudouridine(1915) in 23S rRNA + S-adenosyl-L-homocysteine + H(+). Specifically methylates the pseudouridine at position 1915 (m3Psi1915) in 23S rRNA. The protein is Ribosomal RNA large subunit methyltransferase H of Marinomonas sp. (strain MWYL1).